A 206-amino-acid chain; its full sequence is Guanylate kinase (206 aa).

Residues 5 to 183 (GNLFVVAAPS…AVFDLKTIVH (179 aa)) enclose the Guanylate kinase-like domain. 12–19 (APSGAGKS) contacts ATP.

Belongs to the guanylate kinase family.

The protein resides in the cytoplasm. The catalysed reaction is GMP + ATP = GDP + ADP. In terms of biological role, essential for recycling GMP and indirectly, cGMP. The polypeptide is Guanylate kinase (Polaromonas sp. (strain JS666 / ATCC BAA-500)).